The primary structure comprises 248 residues: Regulator of G-protein signaling 7-binding protein A (248 aa).

The tract at residues 1 to 32 (MSSAPNGRKNRPRTAGTIFQIGGKAPSRESER) is disordered. 2 S-palmitoyl cysteine lipidation sites follow: Cys-243 and Cys-244.

It belongs to the RGS7BP/RGS9BP family. Palmitoylated. Undergoes rapid palmitoylation turnover. Palmitoylation regulates the cell membrane and nuclear shuttling and the regulation of GPCR signaling. Upon depalmitoylation, it is targeted from the plasma membrane into the nucleus. GPCR signaling inhibits depalmitoylation and promotes localization to the plasma membrane.

It localises to the nucleus. Its subcellular location is the cytoplasm. The protein resides in the cell membrane. Functionally, regulator of G protein-coupled receptor (GPCR) signaling. Regulatory subunit of the R7-Gbeta5 complexes that acts by controlling the subcellular location of the R7-Gbeta5 complexes. When palmitoylated, it targets the R7-Gbeta5 complexes to the plasma membrane, leading to inhibit G protein alpha subunits. When it is unpalmitoylated, the R7-Gbeta5 complexes undergo a nuclear/cytoplasmic shuttling. The polypeptide is Regulator of G-protein signaling 7-binding protein A (rgs7bpa) (Danio rerio (Zebrafish)).